The primary structure comprises 156 residues: Deoxyuridine 5'-triphosphate nucleotidohydrolase (156 aa).

Residues 76-78 (RSG), N89, 93-95 (TVD), and K103 contribute to the substrate site.

The protein belongs to the dUTPase family. Requires Mg(2+) as cofactor.

The catalysed reaction is dUTP + H2O = dUMP + diphosphate + H(+). It participates in pyrimidine metabolism; dUMP biosynthesis; dUMP from dCTP (dUTP route): step 2/2. Functionally, this enzyme is involved in nucleotide metabolism: it produces dUMP, the immediate precursor of thymidine nucleotides and it decreases the intracellular concentration of dUTP so that uracil cannot be incorporated into DNA. The polypeptide is Deoxyuridine 5'-triphosphate nucleotidohydrolase (Rhizobium leguminosarum bv. trifolii (strain WSM2304)).